We begin with the raw amino-acid sequence, 589 residues long: MAATCSLLASFLLCFALLSAVSFAADPFVSYDFRVSYLTASPLGVPQQVIAVNGQFPGPLLNATTNYNVVVNVFNHLDEPLLLTWPGIQMRRNSWQDGVLGTNCPIPPRWNFTYQFQVKDQIGSFFYSPSLNFQRASGGFGPIVINNRDIIPIPFPQPDGELIFIIGDWYTQDHKALRRALDSGKELGMPDGVLINGKGPYKYNSSVPDGIDYLTFHVEPGKTYRIRVHNVGISTSLNFRIQNHSLLLVETEGHYTSQANFTDFDVHVGQSYSFLVTMDQDATSDYYIVASARFVNETVWQRVTGVAILHYSNSKGPVSGPLPVPKTDVSSPWSAMSQPKTIRQNTSASGARPNPQGSFHYGQINITNTYILRSLPPTIINGALRATLNGISFVNPSTPVRLADRNKVKGAYKLDFPDRPFNRPLRLDRSMINATYKGFIQVVFQNNDTKIQSFHVDGYSFFVVGMDFGIWSEDKKGSYNNWDAISRSTIEVYPGGWTAVLISLDNVGVWNIRVENLDRWYLGEETYMRITNPEEDGKTEMDPPDNVLYCGALKNLQKEQHHSAATSILNGHLKLMLLMVLLASVFRFC.

The first 24 residues, 1–24 (MAATCSLLASFLLCFALLSAVSFA), serve as a signal peptide directing secretion. N-linked (GlcNAc...) asparagine glycans are attached at residues N62, N111, N204, N243, N260, N296, N345, N365, N433, and N447. A disordered region spans residues 322 to 356 (LPVPKTDVSSPWSAMSQPKTIRQNTSASGARPNPQ). Over residues 328-349 (DVSSPWSAMSQPKTIRQNTSAS) the composition is skewed to polar residues. H455 is a Cu cation binding site. Residue S563 is the site of GPI-anchor amidated serine attachment. A propeptide spans 564–589 (AATSILNGHLKLMLLMVLLASVFRFC) (removed in mature form).

It belongs to the multicopper oxidase family. Cu cation serves as cofactor.

The protein localises to the cell membrane. In Arabidopsis thaliana (Mouse-ear cress), this protein is Monocopper oxidase-like protein SKS1 (SKS1).